The chain runs to 101 residues: DNA-binding protein Fis (101 aa).

The segment at residues 77–96 (QTRAANMLGINRGTLRKKLK) is a DNA-binding region (H-T-H motif).

Belongs to the transcriptional regulatory Fis family. As to quaternary structure, homodimer.

Activates ribosomal RNA transcription. Plays a direct role in upstream activation of rRNA promoters. The polypeptide is DNA-binding protein Fis (Shewanella amazonensis (strain ATCC BAA-1098 / SB2B)).